The chain runs to 556 residues: Formate--tetrahydrofolate ligase (556 aa).

65-72 provides a ligand contact to ATP; sequence TPAGEGKT.

It belongs to the formate--tetrahydrofolate ligase family.

The catalysed reaction is (6S)-5,6,7,8-tetrahydrofolate + formate + ATP = (6R)-10-formyltetrahydrofolate + ADP + phosphate. It participates in one-carbon metabolism; tetrahydrofolate interconversion. The chain is Formate--tetrahydrofolate ligase from Acetivibrio thermocellus (strain ATCC 27405 / DSM 1237 / JCM 9322 / NBRC 103400 / NCIMB 10682 / NRRL B-4536 / VPI 7372) (Clostridium thermocellum).